A 300-amino-acid chain; its full sequence is Sulfate adenylyltransferase subunit 2 (300 aa).

The segment at 281–300 is disordered; it reads RAIDRDEAGSMEKKKREGYF.

It belongs to the PAPS reductase family. CysD subfamily. In terms of assembly, heterodimer composed of CysD, the smaller subunit, and CysN.

It carries out the reaction sulfate + ATP + H(+) = adenosine 5'-phosphosulfate + diphosphate. Its pathway is sulfur metabolism; hydrogen sulfide biosynthesis; sulfite from sulfate: step 1/3. With CysN forms the ATP sulfurylase (ATPS) that catalyzes the adenylation of sulfate producing adenosine 5'-phosphosulfate (APS) and diphosphate, the first enzymatic step in sulfur assimilation pathway. APS synthesis involves the formation of a high-energy phosphoric-sulfuric acid anhydride bond driven by GTP hydrolysis by CysN coupled to ATP hydrolysis by CysD. This is Sulfate adenylyltransferase subunit 2 from Brucella canis (strain ATCC 23365 / NCTC 10854 / RM-666).